Here is a 285-residue protein sequence, read N- to C-terminus: OPEP-3 protein (285 aa).

This chain is OPEP-3 protein (OPEP-3), found in Orgyia pseudotsugata multicapsid polyhedrosis virus (OpMNPV).